A 228-amino-acid polypeptide reads, in one-letter code: Biosynthetic peptidoglycan transglycosylase (228 aa).

Residues 8–28 (GVAALLALFLLYQLWIFGHIV) form a helical membrane-spanning segment.

Belongs to the glycosyltransferase 51 family.

Its subcellular location is the cell inner membrane. It carries out the reaction [GlcNAc-(1-&gt;4)-Mur2Ac(oyl-L-Ala-gamma-D-Glu-L-Lys-D-Ala-D-Ala)](n)-di-trans,octa-cis-undecaprenyl diphosphate + beta-D-GlcNAc-(1-&gt;4)-Mur2Ac(oyl-L-Ala-gamma-D-Glu-L-Lys-D-Ala-D-Ala)-di-trans,octa-cis-undecaprenyl diphosphate = [GlcNAc-(1-&gt;4)-Mur2Ac(oyl-L-Ala-gamma-D-Glu-L-Lys-D-Ala-D-Ala)](n+1)-di-trans,octa-cis-undecaprenyl diphosphate + di-trans,octa-cis-undecaprenyl diphosphate + H(+). Its pathway is cell wall biogenesis; peptidoglycan biosynthesis. Peptidoglycan polymerase that catalyzes glycan chain elongation from lipid-linked precursors. In Laribacter hongkongensis (strain HLHK9), this protein is Biosynthetic peptidoglycan transglycosylase.